The primary structure comprises 264 residues: Small ribosomal subunit protein eS1 (264 aa).

Lys34 is modified (N6-acetyllysine; alternate). Residue Lys34 forms a Glycyl lysine isopeptide (Lys-Gly) (interchain with G-Cter in SUMO2); alternate linkage. Lys56 carries the post-translational modification N6-acetyllysine. Position 155 is an ADP-ribosyltyrosine (Tyr155). The tract at residues 233–264 is disordered; sequence GEGSSSGKATGDETGAKVERADGYEPPVQESV. 2 positions are modified to phosphoserine: Ser236 and Ser237. The span at 242-255 shows a compositional bias: basic and acidic residues; sequence TGDETGAKVERADG. Lys249 is modified (N6-acetyllysine; alternate). Lys249 participates in a covalent cross-link: Glycyl lysine isopeptide (Lys-Gly) (interchain with G-Cter in SUMO2); alternate. Tyr256 is subject to Phosphotyrosine. Ser263 is modified (phosphoserine).

Belongs to the eukaryotic ribosomal protein eS1 family. In terms of assembly, component of the small ribosomal subunit. Mature ribosomes consist of a small (40S) and a large (60S) subunit. The 40S subunit contains about 33 different proteins and 1 molecule of RNA (18S). The 60S subunit contains about 49 different proteins and 3 molecules of RNA (28S, 5.8S and 5S). Part of the small subunit (SSU) processome, composed of more than 70 proteins and the RNA chaperone small nucleolar RNA (snoRNA) U3. ADP-ribosylated at Tyr-155 by PARP1 in presence of HPF1.

It is found in the cytoplasm. The protein resides in the nucleus. Its subcellular location is the nucleolus. Its function is as follows. Component of the small ribosomal subunit. The ribosome is a large ribonucleoprotein complex responsible for the synthesis of proteins in the cell. Part of the small subunit (SSU) processome, first precursor of the small eukaryotic ribosomal subunit. During the assembly of the SSU processome in the nucleolus, many ribosome biogenesis factors, an RNA chaperone and ribosomal proteins associate with the nascent pre-rRNA and work in concert to generate RNA folding, modifications, rearrangements and cleavage as well as targeted degradation of pre-ribosomal RNA by the RNA exosome. May play a role during erythropoiesis. This chain is Small ribosomal subunit protein eS1, found in Callithrix jacchus (White-tufted-ear marmoset).